Here is a 694-residue protein sequence, read N- to C-terminus: Transcription activator of gluconeogenesis PTRG_06536 (694 aa).

Residues 1–57 (MTTPDAEDASPSPEYRSDQDDDMAAEQTTDRQSGDASPTQKPANGKPNAKDPLRPRR) form a disordered region. The segment at residues 64–92 (CFACQRAHLTCGDERPCGRCIKRGLQDHC) is a DNA-binding region (zn(2)-C6 fungal-type). Disordered stretches follow at residues 175–216 (FSNQ…FGPL), 289–369 (AMAF…GDNP), 384–420 (AQRS…RDTK), and 539–569 (VNLG…SEGA). The segment covering 193 to 204 (SVQNAGAPSTMS) has biased composition (polar residues). Positions 205–214 (QGQQGMQQFG) are enriched in low complexity. Positions 302–324 (WQETQSRQGSMHVHTPNNTSGSG) are enriched in polar residues. Low complexity predominate over residues 349-363 (ATHSTASPASTDAST). Residues 392–408 (RPQQENRPPTTALQSIH) are compositionally biased toward polar residues. One can recognise a PAS domain in the interval 485–559 (LQRHLMTLQE…SDTSTQNTTP (75 aa)).

This sequence belongs to the ERT1/acuK family.

The protein resides in the nucleus. Transcription factor which regulates nonfermentable carbon utilization. Activator of gluconeogenetic genes. This is Transcription activator of gluconeogenesis PTRG_06536 from Pyrenophora tritici-repentis (strain Pt-1C-BFP) (Wheat tan spot fungus).